A 639-amino-acid polypeptide reads, in one-letter code: Chaperone protein DnaK (639 aa).

Phosphothreonine; by autocatalysis is present on T198. The tract at residues 597–639 (AYSAGQSAEGAPHAAGAEASAQSRTDDGVVDADFEEVDEKKGH) is disordered. Residues 603–617 (SAEGAPHAAGAEASA) are compositionally biased toward low complexity. Residues 624 to 633 (GVVDADFEEV) show a composition bias toward acidic residues.

Belongs to the heat shock protein 70 family.

Acts as a chaperone. This is Chaperone protein DnaK from Rhodospirillum rubrum (strain ATCC 11170 / ATH 1.1.1 / DSM 467 / LMG 4362 / NCIMB 8255 / S1).